A 640-amino-acid chain; its full sequence is Protein UL35 (640 aa).

Disordered stretches follow at residues 353-373 (ERGE…PREA), 500-571 (ASSS…PRQR), and 586-640 (AYSH…LRHL). Residues 358–367 (GDEDEEQEND) show a composition bias toward acidic residues. Positions 500 to 562 (ASSSSASSSS…LSGSHGISSA (63 aa)) are enriched in low complexity. Residues 588-598 (SHHRRHRRRRS) show a composition bias toward basic residues. Residues 631 to 640 (DDLAENLRHL) show a composition bias toward basic and acidic residues.

It belongs to the herpesviridae pp85 family. Interacts with UL82. Interacts with isoform UL35A. Interacts with host UBP7; this interaction significantly inhibits the ability of USP7 to form nuclear bodies. Interacts with host DCAF1 (via C-terminus). Interacts with host SNX5; this interaction allows proper gB localization during viral assembly. Interacts with host TBK1; this interaction prevents type I interferon production. As to quaternary structure, interacts with UL82. Interacts with isoform UL35. Interacts with host UBP7; this interaction significantly inhibits the ability of USP7 to form nuclear bodies. Interacts with host SNX5; this interaction allows proper gB localization during viral assembly.

It is found in the virion tegument. The protein resides in the host nucleus. It localises to the host cytoplasm. Functionally, plays important role in immediate-early gene expression through interaction with UL82. Forms nuclear bodies in host nucleus, independently of PML. In turn, UL35 nuclear bodies associate with and remodel PML bodies. Through interaction with host DCAF1, causes cells to accumulate in the G2 phase of the cell cycle by inducing a DNA damage response. Regulates viral assembly by controlling the localization of the essential gB through regulation of a retrograde transport pathway. This modulation occurs via binding and inhibition of host sorting nexin 5/SNX5. Also plays a role in the inhibition of pattern recognition receptor-mediated type I interferon signaling at the level of TBK1. In terms of biological role, promotes cytoplasmic UL82 accumulation and inhibits UL35-containing nuclear bodies formation. Regulates viral assembly by controlling the localization of the essential gB through regulation of a retrograde transport pathway. This modulation occurs via binding and inhibition of host sorting nexin 5/SNX5. This chain is Protein UL35 (UL35), found in Homo sapiens (Human).